A 298-amino-acid chain; its full sequence is MSNSWWEITVLCEPSLEETVFWRLEDFGCSGTATAKKQSSLEVKAYIPEIKAQLLDLEALSLWLKQDALILGFPEPVSHWQLMDEEDWASSWKQHWQISEIGDRFLICPAWLNPPENNQRLVIKIDPGSAFGTGTHPTTQLCLESLEMRLSSHPEPKIIADIGCGSGILAIGAILLGAKKVYAVDTDPLAVNATRSNRHLNRINPENLAINQGSVEELLELIPDGVDGIVCNILAETIIALMPEINRLAKPTTWGILSGILVTQAQAVTDILEPQGWTVAALWKRQEWCCLQIRRALD.

Positions 139, 163, 185, and 232 each coordinate S-adenosyl-L-methionine.

This sequence belongs to the methyltransferase superfamily. PrmA family.

Its subcellular location is the cytoplasm. It catalyses the reaction L-lysyl-[protein] + 3 S-adenosyl-L-methionine = N(6),N(6),N(6)-trimethyl-L-lysyl-[protein] + 3 S-adenosyl-L-homocysteine + 3 H(+). Its function is as follows. Methylates ribosomal protein L11. The sequence is that of Ribosomal protein L11 methyltransferase from Microcystis aeruginosa (strain NIES-843 / IAM M-2473).